Here is a 200-residue protein sequence, read N- to C-terminus: Transcription elongation factor A protein-like 5 (200 aa).

5 stretches are compositionally biased toward basic and acidic residues: residues 1 to 49 (MEKF…KLEV), 61 to 85 (GEGK…KPDS), 94 to 106 (RAAE…DYVP), 114 to 153 (DRGT…EELR), and 190 to 200 (GQKDLEDAPFV). Residues 1 to 200 (MEKFYKENEG…QKDLEDAPFV (200 aa)) form a disordered region.

Belongs to the TFS-II family. TFA subfamily.

The protein localises to the nucleus. In terms of biological role, may be involved in transcriptional regulation. The sequence is that of Transcription elongation factor A protein-like 5 (Tceal5) from Mus musculus (Mouse).